The primary structure comprises 91 residues: Small ribosomal subunit protein uS19 (91 aa).

It belongs to the universal ribosomal protein uS19 family.

In terms of biological role, protein S19 forms a complex with S13 that binds strongly to the 16S ribosomal RNA. This chain is Small ribosomal subunit protein uS19, found in Amoebophilus asiaticus (strain 5a2).